We begin with the raw amino-acid sequence, 441 residues long: Argininosuccinate lyase (441 aa).

It belongs to the lyase 1 family. Argininosuccinate lyase subfamily.

The protein resides in the cytoplasm. It carries out the reaction 2-(N(omega)-L-arginino)succinate = fumarate + L-arginine. The protein operates within amino-acid biosynthesis; L-arginine biosynthesis; L-arginine from L-ornithine and carbamoyl phosphate: step 3/3. This is Argininosuccinate lyase from Thermoanaerobacter pseudethanolicus (strain ATCC 33223 / 39E) (Clostridium thermohydrosulfuricum).